The primary structure comprises 512 residues: D-alanine--D-alanyl carrier protein ligase (512 aa).

152-153 (TS) is a binding site for ATP. Asp-199 lines the D-alanine pocket. 294 to 299 (NAYGPT) serves as a coordination point for ATP. Val-303 serves as a coordination point for D-alanine. Residues Asp-385, 397–400 (YGGR), and Lys-499 contribute to the ATP site. Lys-499 contributes to the D-alanine binding site.

The protein belongs to the ATP-dependent AMP-binding enzyme family. DltA subfamily.

The protein localises to the cytoplasm. It carries out the reaction holo-[D-alanyl-carrier protein] + D-alanine + ATP = D-alanyl-[D-alanyl-carrier protein] + AMP + diphosphate. It participates in cell wall biogenesis; lipoteichoic acid biosynthesis. Functionally, catalyzes the first step in the D-alanylation of lipoteichoic acid (LTA), the activation of D-alanine and its transfer onto the D-alanyl carrier protein (Dcp) DltC. In an ATP-dependent two-step reaction, forms a high energy D-alanyl-AMP intermediate, followed by transfer of the D-alanyl residue as a thiol ester to the phosphopantheinyl prosthetic group of the Dcp. D-alanylation of LTA plays an important role in modulating the properties of the cell wall in Gram-positive bacteria, influencing the net charge of the cell wall. This Streptococcus pyogenes serotype M3 (strain SSI-1) protein is D-alanine--D-alanyl carrier protein ligase.